Consider the following 573-residue polypeptide: Globulin-1 S allele (573 aa).

The or 21 signal peptide spans 1 to 18 (MVSARIVVLLAVLLCAAA). Residues 19–86 (AVASSWEDDN…DRSGEGSSED (68 aa)) constitute a propeptide that is removed on maturation. Residues 65–102 (EKRQERSRHEADDRSGEGSSEDEREREQEKEEKQKDRR) are disordered. Cupin type-1 domains lie at 104 to 262 (YVFD…DRLE) and 311 to 493 (YSLL…EEVD). Residues 288-315 (RHASEGGHGPHWPLPPFGESRGPYSLLD) are disordered. N-linked (GlcNAc...) asparagine glycosylation occurs at asparagine 349. Disordered regions lie at residues 382–416 (PHRQ…EVGQ) and 498–573 (SRRE…TARM). Positions 390–402 (ESERERGKGRRSE) are enriched in basic and acidic residues. Residues 403-413 (EEEESSEEQEE) show a composition bias toward acidic residues. 2 stretches are compositionally biased toward basic and acidic residues: residues 525 to 542 (EERH…REER) and 549 to 561 (REGR…REEV).

It belongs to the 7S seed storage protein family. In terms of processing, three protein-processing steps occur in the formation of the mature protein from the primary translation product.

This is Globulin-1 S allele (GLB1) from Zea mays (Maize).